Here is a 149-residue protein sequence, read N- to C-terminus: Calmodulin-1 (149 aa).

Residue alanine 2 is modified to N-acetylalanine. EF-hand domains lie at 8-43 (DQIA…LGQN), 44-79 (PTEA…KMKD), 81-116 (DSEE…LGEK), and 117-149 (LTDE…MMAK). 14 residues coordinate Ca(2+): aspartate 21, aspartate 23, aspartate 25, cysteine 27, glutamate 32, aspartate 57, aspartate 59, asparagine 61, threonine 63, glutamate 68, aspartate 94, aspartate 96, asparagine 98, and glutamate 105. Lysine 116 is subject to N6,N6,N6-trimethyllysine. Ca(2+) contacts are provided by aspartate 130, aspartate 132, aspartate 134, glutamine 136, and glutamate 141.

Belongs to the calmodulin family.

Its function is as follows. Calmodulin mediates the control of a large number of enzymes, ion channels and other proteins by Ca(2+). Among the enzymes to be stimulated by the calmodulin-Ca(2+) complex are a number of protein kinases and phosphatases. The polypeptide is Calmodulin-1 (CAM1-1) (Oryza sativa subsp. indica (Rice)).